The sequence spans 185 residues: MTLKELYAETRSHMQKSLEVLEHNLAGLRTGRANPALLLHLKVEYYGAHVPLNQIATVTAPDPRTLVVQSWDQNALKAIEKAIRDSDLGLNPSNKGDALYINIPPLTEERRKDLVRAVRQYAEEGRVAIRNIRREALDKLKKLAKELHLSEDETKRAEAEIQKITDEFIAKADQLAEKKEQEILG.

It belongs to the RRF family.

Its subcellular location is the cytoplasm. Its function is as follows. Responsible for the release of ribosomes from messenger RNA at the termination of protein biosynthesis. May increase the efficiency of translation by recycling ribosomes from one round of translation to another. The chain is Ribosome-recycling factor from Thermus thermophilus (strain ATCC BAA-163 / DSM 7039 / HB27).